The sequence spans 422 residues: UDP-N-acetylglucosamine 1-carboxyvinyltransferase (422 aa).

A phosphoenolpyruvate-binding site is contributed by 22–23 (KN). Arginine 93 provides a ligand contact to UDP-N-acetyl-alpha-D-glucosamine. The active-site Proton donor is the cysteine 117. A 2-(S-cysteinyl)pyruvic acid O-phosphothioketal modification is found at cysteine 117. UDP-N-acetyl-alpha-D-glucosamine-binding positions include 122 to 126 (RPVDL), aspartate 308, and leucine 330.

This sequence belongs to the EPSP synthase family. MurA subfamily.

It is found in the cytoplasm. It catalyses the reaction phosphoenolpyruvate + UDP-N-acetyl-alpha-D-glucosamine = UDP-N-acetyl-3-O-(1-carboxyvinyl)-alpha-D-glucosamine + phosphate. It participates in cell wall biogenesis; peptidoglycan biosynthesis. Its function is as follows. Cell wall formation. Adds enolpyruvyl to UDP-N-acetylglucosamine. This chain is UDP-N-acetylglucosamine 1-carboxyvinyltransferase, found in Helicobacter pylori (strain HPAG1).